Here is a 145-residue protein sequence, read N- to C-terminus: 3-hydroxyacyl-[acyl-carrier-protein] dehydratase FabZ (145 aa).

His-49 is an active-site residue.

Belongs to the thioester dehydratase family. FabZ subfamily.

Its subcellular location is the cytoplasm. The enzyme catalyses a (3R)-hydroxyacyl-[ACP] = a (2E)-enoyl-[ACP] + H2O. In terms of biological role, involved in unsaturated fatty acids biosynthesis. Catalyzes the dehydration of short chain beta-hydroxyacyl-ACPs and long chain saturated and unsaturated beta-hydroxyacyl-ACPs. The chain is 3-hydroxyacyl-[acyl-carrier-protein] dehydratase FabZ from Rickettsia akari (strain Hartford).